The following is a 290-amino-acid chain: Elongation factor Ts (290 aa).

The segment at threonine 79–valine 82 is involved in Mg(2+) ion dislocation from EF-Tu.

Belongs to the EF-Ts family.

It localises to the cytoplasm. Associates with the EF-Tu.GDP complex and induces the exchange of GDP to GTP. It remains bound to the aminoacyl-tRNA.EF-Tu.GTP complex up to the GTP hydrolysis stage on the ribosome. In Pseudoalteromonas atlantica (strain T6c / ATCC BAA-1087), this protein is Elongation factor Ts.